A 233-amino-acid polypeptide reads, in one-letter code: tRNA (guanine-N(7)-)-methyltransferase (233 aa).

The segment at 1-22 (MIDENHPMRAAGNFFGRRHGKP) is disordered. S-adenosyl-L-methionine contacts are provided by E64, E89, D116, and D138. Residue D138 is part of the active site. Residues K142, D174, and 212–215 (TRYE) each bind substrate.

Belongs to the class I-like SAM-binding methyltransferase superfamily. TrmB family.

It catalyses the reaction guanosine(46) in tRNA + S-adenosyl-L-methionine = N(7)-methylguanosine(46) in tRNA + S-adenosyl-L-homocysteine. It participates in tRNA modification; N(7)-methylguanine-tRNA biosynthesis. Functionally, catalyzes the formation of N(7)-methylguanine at position 46 (m7G46) in tRNA. In Brucella melitensis biotype 1 (strain ATCC 23456 / CCUG 17765 / NCTC 10094 / 16M), this protein is tRNA (guanine-N(7)-)-methyltransferase.